We begin with the raw amino-acid sequence, 205 residues long: CASP-like protein 0U1 (205 aa).

The Cytoplasmic segment spans residues 1–66 (MSGGDIDPTA…GYHKFAVFQF (66 aa)). An MARVEL domain is found at 10-162 (AINSPKFRLI…SMMFTWKEWR (153 aa)). A helical membrane pass occupies residues 67–87 (LVVICVTYWLFTMLWMGMYLI). The Extracellular segment spans residues 88-90 (QKV). The helical transmembrane segment at 91–111 (PPAGTEFMIYAVFNVLILIAF) threads the bilayer. Residues 112–137 (STSWTECNETIVDPTYPVCKRATGAK) are Cytoplasmic-facing. The chain crosses the membrane as a helical span at residues 138-158 (ASIAFAMFTWLALCVSMMFTW). The Extracellular portion of the chain corresponds to 159–167 (KEWRDQNYE). The helical transmembrane segment at 168-188 (GLPIFGDFSSFMPGGGGGGMG) threads the bilayer. At 189 to 205 (GGGGYERPSDVNTQTYA) the chain is on the cytoplasmic side.

This sequence belongs to the Casparian strip membrane proteins (CASP) family. Homodimer and heterodimers.

The protein localises to the cell membrane. The chain is CASP-like protein 0U1 from Micromonas pusilla (strain CCMP1545) (Picoplanktonic green alga).